A 332-amino-acid chain; its full sequence is tRNA-dihydrouridine(20/20a) synthase (332 aa).

FMN is bound by residues 22–24 (PMM) and Gln75. Residue Cys105 is the Proton donor of the active site. Residues Lys144, His177, 217–219 (NGG), and 239–240 (GR) contribute to the FMN site.

It belongs to the Dus family. DusA subfamily. Requires FMN as cofactor.

The catalysed reaction is 5,6-dihydrouridine(20) in tRNA + NADP(+) = uridine(20) in tRNA + NADPH + H(+). The enzyme catalyses 5,6-dihydrouridine(20) in tRNA + NAD(+) = uridine(20) in tRNA + NADH + H(+). It catalyses the reaction 5,6-dihydrouridine(20a) in tRNA + NADP(+) = uridine(20a) in tRNA + NADPH + H(+). It carries out the reaction 5,6-dihydrouridine(20a) in tRNA + NAD(+) = uridine(20a) in tRNA + NADH + H(+). In terms of biological role, catalyzes the synthesis of 5,6-dihydrouridine (D), a modified base found in the D-loop of most tRNAs, via the reduction of the C5-C6 double bond in target uridines. Specifically modifies U20 and U20a in tRNAs. The sequence is that of tRNA-dihydrouridine(20/20a) synthase from Xylella fastidiosa (strain Temecula1 / ATCC 700964).